We begin with the raw amino-acid sequence, 1275 residues long: Inner capsid protein lambda-1 (1275 aa).

The segment covering 1–12 (MKRIPRKTKGKS) has biased composition (basic residues). The disordered stretch occupies residues 1–149 (MKRIPRKTKG…DNEGGSNQKP (149 aa)). 2 stretches are compositionally biased toward basic and acidic residues: residues 18 to 35 (DSTE…DKQN) and 75 to 117 (NNDE…DKSK). The segment covering 118–149 (AQVTYSDTGINNANELSRSGNVDNEGGSNQKP) has biased composition (polar residues). A C2H2-type zinc finger spans residues 181-203 (YQCHVCSAVLFSPLDLDAHVASH).

This sequence belongs to the orthoreovirus lambda-1 protein family. In terms of assembly, homodecamer; each decamer is made up of two conformers of VP2, called VP2A and VP2B. 12 homodecamers assemble to form an icosahedral capsid. Interacts with protein mu-NS; in viral inclusions. It depends on Mg(2+) as a cofactor. Mn(2+) serves as cofactor.

Its subcellular location is the virion. The catalysed reaction is ATP + H2O = ADP + phosphate + H(+). Its function is as follows. Inner capsid protein that self-assembles to form an icosahedral capsid with a T=2 symmetry, which consists of 120 copies of VP2, with channels at each of its five-fold vertices. This capsid constitutes the innermost concentric layer of the viral mature particle. Functionally, displays NTPase, RNA 5'-triphosphatase (RTPase) and RNA helicase activities. Helicase activity might be involved in unwinding or reannealing dsRNA during RNA synthesis. RTPase enzymatic activity represents the first step in RNA capping, which yields a 5'-diphosphorylated plus-strand RNA. This chain is Inner capsid protein lambda-1 (L3), found in Reovirus type 3 (strain Dearing) (T3D).